The primary structure comprises 258 residues: Chymotrypsin-like elastase family member 1 (258 aa).

The first 8 residues, 1–8, serve as a signal peptide directing secretion; sequence MLVLYGHS. Positions 9–18 are cleaved as a propeptide — activation peptide; sequence TQDLPETNAR. The Peptidase S1 domain occupies 19 to 256; the sequence is VVGGTEAGRN…YISWINNVIA (238 aa). Residues C48 and C64 are joined by a disulfide bond. H63 serves as the catalytic Charge relay system. Residues D77, N79, Q82, and E87 each coordinate Ca(2+). The N-linked (GlcNAc...) asparagine glycan is linked to N79. D111 acts as the Charge relay system in catalysis. 3 cysteine pairs are disulfide-bonded: C145–C212, C176–C192, and C202–C232. Residue S206 is the Charge relay system of the active site. The N-linked (GlcNAc...) asparagine glycan is linked to N233.

The protein belongs to the peptidase S1 family. Elastase subfamily. Ca(2+) serves as cofactor. In terms of tissue distribution, basal layers of epidermis (at protein level). Not expressed in the pancreas.

It is found in the secreted. The enzyme catalyses Hydrolysis of proteins, including elastin. Preferential cleavage: Ala-|-Xaa.. Functionally, serine proteases that hydrolyze many proteins in addition to elastin. This Homo sapiens (Human) protein is Chymotrypsin-like elastase family member 1 (CELA1).